We begin with the raw amino-acid sequence, 185 residues long: Ribosome-recycling factor (185 aa).

The disordered stretch occupies residues 141–160 (RIQKDGEAGEDEVGRAEKEL).

It belongs to the RRF family.

Its subcellular location is the cytoplasm. Responsible for the release of ribosomes from messenger RNA at the termination of protein biosynthesis. May increase the efficiency of translation by recycling ribosomes from one round of translation to another. This is Ribosome-recycling factor from Rhodococcus jostii (strain RHA1).